The primary structure comprises 444 residues: Exodeoxyribonuclease 7 large subunit (444 aa).

Belongs to the XseA family. Heterooligomer composed of large and small subunits.

The protein resides in the cytoplasm. It catalyses the reaction Exonucleolytic cleavage in either 5'- to 3'- or 3'- to 5'-direction to yield nucleoside 5'-phosphates.. Functionally, bidirectionally degrades single-stranded DNA into large acid-insoluble oligonucleotides, which are then degraded further into small acid-soluble oligonucleotides. This is Exodeoxyribonuclease 7 large subunit from Rickettsia canadensis (strain McKiel).